The primary structure comprises 293 residues: 1D-myo-inositol 2-acetamido-2-deoxy-alpha-D-glucopyranoside deacetylase (293 aa).

Residues His15, Asp18, and His148 each coordinate Zn(2+).

This sequence belongs to the MshB deacetylase family. Zn(2+) is required as a cofactor.

It catalyses the reaction 1D-myo-inositol 2-acetamido-2-deoxy-alpha-D-glucopyranoside + H2O = 1D-myo-inositol 2-amino-2-deoxy-alpha-D-glucopyranoside + acetate. Functionally, catalyzes the deacetylation of 1D-myo-inositol 2-acetamido-2-deoxy-alpha-D-glucopyranoside (GlcNAc-Ins) in the mycothiol biosynthesis pathway. The protein is 1D-myo-inositol 2-acetamido-2-deoxy-alpha-D-glucopyranoside deacetylase of Corynebacterium diphtheriae (strain ATCC 700971 / NCTC 13129 / Biotype gravis).